A 337-amino-acid polypeptide reads, in one-letter code: Alcohol dehydrogenase (337 aa).

Cys38, His61, Cys92, Cys95, Cys98, Cys106, and Cys148 together coordinate Zn(2+). NAD(+)-binding positions include 172–177, Asp195, Lys200, 260–262, and Arg331; these read GIGGLG and VGL.

Belongs to the zinc-containing alcohol dehydrogenase family. Zn(2+) serves as cofactor.

It carries out the reaction a primary alcohol + NAD(+) = an aldehyde + NADH + H(+). The catalysed reaction is a secondary alcohol + NAD(+) = a ketone + NADH + H(+). Substrate inhibition is not observed with any alcohols, and the enzyme-NADH dissociation is not considered to be a rate-limiting step. Its function is as follows. NAD(+)-dependent alcohol dehydrogenase. This chain is Alcohol dehydrogenase (adhT), found in Geobacillus stearothermophilus (Bacillus stearothermophilus).